A 525-amino-acid polypeptide reads, in one-letter code: Nucleolar complex protein 4 homolog (525 aa).

The next 3 helical transmembrane spans lie at 305–325 (AAYD…FVPI), 356–376 (FFHL…LVAA), and 384–404 (LSLT…CNLI).

It belongs to the CBF/MAK21 family.

It is found in the nucleus membrane. The protein resides in the nucleus. Its subcellular location is the nucleolus. In Danio rerio (Zebrafish), this protein is Nucleolar complex protein 4 homolog (noc4l).